An 83-amino-acid chain; its full sequence is Sec-independent protein translocase protein TatA (83 aa).

Residues 1 to 21 (MGGLSLPHLIVLALVVLILFG) traverse the membrane as a helical segment. The disordered stretch occupies residues 34–83 (KGIKSFKQGMNDEDSKPVTPPPAQIPPASLQQTPPPAQPAPQPTSTDQAQ). Residues 66–75 (TPPPAQPAPQ) show a composition bias toward pro residues.

Belongs to the TatA/E family. The Tat system comprises two distinct complexes: a TatABC complex, containing multiple copies of TatA, TatB and TatC subunits, and a separate TatA complex, containing only TatA subunits. Substrates initially bind to the TatABC complex, which probably triggers association of the separate TatA complex to form the active translocon.

It localises to the cell inner membrane. In terms of biological role, part of the twin-arginine translocation (Tat) system that transports large folded proteins containing a characteristic twin-arginine motif in their signal peptide across membranes. TatA could form the protein-conducting channel of the Tat system. This is Sec-independent protein translocase protein TatA from Novosphingobium aromaticivorans (strain ATCC 700278 / DSM 12444 / CCUG 56034 / CIP 105152 / NBRC 16084 / F199).